A 213-amino-acid chain; its full sequence is Riboflavin synthase (213 aa).

2 Lumazine-binding repeats span residues 1-97 and 98-195; these read MFTG…IGGH and LMSG…VDTV. Residues 4–6, 48–50, 62–67, 101–103, lysine 137, 146–148, and 160–165 each bind 2,4-dihydroxypteridine; these read GIV, CLT, DLMKET, GHI, SLT, and HLIPET.

As to quaternary structure, homotrimer. Unlike in B.subtilis, does not interact with 6,7-dimethyl-8-ribityllumazine synthase.

It catalyses the reaction 2 6,7-dimethyl-8-(1-D-ribityl)lumazine + H(+) = 5-amino-6-(D-ribitylamino)uracil + riboflavin. Its pathway is cofactor biosynthesis; riboflavin biosynthesis; riboflavin from 2-hydroxy-3-oxobutyl phosphate and 5-amino-6-(D-ribitylamino)uracil: step 2/2. Functionally, catalyzes the dismutation of two molecules of 6,7-dimethyl-8-ribityllumazine, resulting in the formation of riboflavin and 5-amino-6-(D-ribitylamino)uracil. This Escherichia coli (strain K12) protein is Riboflavin synthase (ribC).